Here is a 333-residue protein sequence, read N- to C-terminus: Ornithine carbamoyltransferase (333 aa).

Carbamoyl phosphate is bound by residues 57 to 60 (STRT), Gln-83, Arg-107, and 134 to 137 (HPTQ). L-ornithine contacts are provided by residues Asn-168, Asp-232, and 236–237 (SM). Carbamoyl phosphate-binding positions include 274–275 (CL) and Arg-319.

It belongs to the aspartate/ornithine carbamoyltransferase superfamily. OTCase family.

It localises to the cytoplasm. The catalysed reaction is carbamoyl phosphate + L-ornithine = L-citrulline + phosphate + H(+). It functions in the pathway amino-acid biosynthesis; L-arginine biosynthesis; L-arginine from L-ornithine and carbamoyl phosphate: step 1/3. Its function is as follows. Reversibly catalyzes the transfer of the carbamoyl group from carbamoyl phosphate (CP) to the N(epsilon) atom of ornithine (ORN) to produce L-citrulline. The polypeptide is Ornithine carbamoyltransferase (Photobacterium profundum (strain SS9)).